We begin with the raw amino-acid sequence, 156 residues long: UPF0251 protein Sfum_2819 (156 aa).

This sequence belongs to the UPF0251 family.

The sequence is that of UPF0251 protein Sfum_2819 from Syntrophobacter fumaroxidans (strain DSM 10017 / MPOB).